Here is a 222-residue protein sequence, read N- to C-terminus: N-(5'-phosphoribosyl)anthranilate isomerase (222 aa).

This sequence belongs to the TrpF family.

It carries out the reaction N-(5-phospho-beta-D-ribosyl)anthranilate = 1-(2-carboxyphenylamino)-1-deoxy-D-ribulose 5-phosphate. The protein operates within amino-acid biosynthesis; L-tryptophan biosynthesis; L-tryptophan from chorismate: step 3/5. The protein is N-(5'-phosphoribosyl)anthranilate isomerase of Symbiobacterium thermophilum (strain DSM 24528 / JCM 14929 / IAM 14863 / T).